A 171-amino-acid chain; its full sequence is Profilin (171 aa).

Positions 5 to 10 are pro-rich sequence-binding; that stretch reads YSWDSY. The short motif at 48–54 is the Plasmodium-specific profilin mini-domain element; the sequence is FDKWSLF. Actin-binding stretches follow at residues 100 to 112 and 152 to 156; these read KYQF…DLEF and RGNSK.

This sequence belongs to the profilin family. As to quaternary structure, binds actin.

It localises to the cytoplasm. The protein resides in the cytoskeleton. In terms of biological role, essential for the invasive blood stages of the parasite. Binds to proline rich sequences in various regulatory formin-like proteins and also to membrane phospholipids. Binds to actin and affects the structure of the cytoskeleton. Weakly sequesters actin monomers. The sequence is that of Profilin from Plasmodium falciparum (isolate 3D7).